The following is a 533-amino-acid chain: MDTPRPIKRALLSVSDKAGIVEFAQRLSEKGVDLLSTGGTAKLLAENGIKVTEVSDYTGHPEIMDGRVKTLHPKVHGGILARRGIDEVVMDENGISAIDMVVVNLYPFANAVSDENCSLENAIENIDIGGPTMVRAAAKNHKDVTIVVNASDYERVLTELDNNNDSLTYKTRFDLAIAAYEHTASYDGMIANYFGKMLPAYGETESKASLENKVKFPRTFNSQFIKTQDLRYGENSHQDAAFYKEENPEEASVSTATQLQGKALSYNNIADTDAALECVKEFDEPACVIVKHANPCGVAIGDDILAAYEGAYKTDPTSAFGGIIAFNRELDADTAEAIVSRQFVEVIIAPSVSDAAAQIVAAKPNLRLLECGQWDNKTTGFDFKRVNGGLLVQDTDQGRVTSDDLTVVTKRQPTDEEMRDLQFCWKVAKFVKSNAIVYVKNSSTIGVGAGQMSRVYSAKVAGIKAADENLEVKGSVMASDAFFPFRDGLDAAAEAGITAVIQPGGSMRDDEVIAAADEHNIAMVFTGMRHFRH.

One can recognise an MGS-like domain in the interval 1–148 (MDTPRPIKRA…KNHKDVTIVV (148 aa)).

The protein belongs to the PurH family.

It carries out the reaction (6R)-10-formyltetrahydrofolate + 5-amino-1-(5-phospho-beta-D-ribosyl)imidazole-4-carboxamide = 5-formamido-1-(5-phospho-D-ribosyl)imidazole-4-carboxamide + (6S)-5,6,7,8-tetrahydrofolate. The enzyme catalyses IMP + H2O = 5-formamido-1-(5-phospho-D-ribosyl)imidazole-4-carboxamide. Its pathway is purine metabolism; IMP biosynthesis via de novo pathway; 5-formamido-1-(5-phospho-D-ribosyl)imidazole-4-carboxamide from 5-amino-1-(5-phospho-D-ribosyl)imidazole-4-carboxamide (10-formyl THF route): step 1/1. The protein operates within purine metabolism; IMP biosynthesis via de novo pathway; IMP from 5-formamido-1-(5-phospho-D-ribosyl)imidazole-4-carboxamide: step 1/1. The polypeptide is Bifunctional purine biosynthesis protein PurH (Colwellia psychrerythraea (strain 34H / ATCC BAA-681) (Vibrio psychroerythus)).